Consider the following 77-residue polypeptide: Probable small nuclear ribonucleoprotein G (77 aa).

A Sm domain is found at 4 to 76; sequence THPPELKKYM…VVIMEPKERI (73 aa).

It belongs to the snRNP Sm proteins family. In terms of assembly, core component of the spliceosomal U1, U2, U4 and U5 small nuclear ribonucleoproteins (snRNPs), the building blocks of the spliceosome.

It is found in the cytoplasm. The protein localises to the cytosol. It localises to the nucleus. Plays a role in pre-mRNA splicing as a core component of the spliceosomal U1, U2, U4 and U5 small nuclear ribonucleoproteins (snRNPs), the building blocks of the spliceosome. This chain is Probable small nuclear ribonucleoprotein G (snr-7), found in Caenorhabditis elegans.